The following is a 487-amino-acid chain: Sensor protein CseC (487 aa).

Residues 1–11 (MRGNLRRPGPA) are compositionally biased toward low complexity. The tract at residues 1–41 (MRGNLRRPGPAGTAGPGRTGIRTSADGGRARPRTGAGTGVR) is disordered. Helical transmembrane passes span 63–83 (ISAA…LVVH) and 185–205 (ALII…VLIG). The HAMP domain maps to 206–262 (GQLSRRLRKAAAAANQVAQGERDVRVRDAIGGVVRDETDDLARAVDAMADALQQRIE). Residues 270–472 (DIAHELRTPV…VAVLWLPEHA (203 aa)) enclose the Histidine kinase domain. H273 bears the Phosphohistidine; by autocatalysis mark.

It is found in the cell membrane. It carries out the reaction ATP + protein L-histidine = ADP + protein N-phospho-L-histidine.. The sequence is that of Sensor protein CseC (cseC) from Streptomyces avermitilis (strain ATCC 31267 / DSM 46492 / JCM 5070 / NBRC 14893 / NCIMB 12804 / NRRL 8165 / MA-4680).